We begin with the raw amino-acid sequence, 688 residues long: Elongation factor G (688 aa).

Residues 6–280 enclose the tr-type G domain; that stretch reads KLFRNFGIMA…AVVDFLPSPI (275 aa). GTP contacts are provided by residues 15-22, 79-83, and 133-136; these read AHIDAGKT, DTPGH, and NKMD.

The protein belongs to the TRAFAC class translation factor GTPase superfamily. Classic translation factor GTPase family. EF-G/EF-2 subfamily.

The protein localises to the cytoplasm. In terms of biological role, catalyzes the GTP-dependent ribosomal translocation step during translation elongation. During this step, the ribosome changes from the pre-translocational (PRE) to the post-translocational (POST) state as the newly formed A-site-bound peptidyl-tRNA and P-site-bound deacylated tRNA move to the P and E sites, respectively. Catalyzes the coordinated movement of the two tRNA molecules, the mRNA and conformational changes in the ribosome. This Ureaplasma urealyticum serovar 10 (strain ATCC 33699 / Western) protein is Elongation factor G.